A 61-amino-acid polypeptide reads, in one-letter code: Alpha-conotoxin EIIA (61 aa).

The first 16 residues, M1 to S16, serve as a signal peptide directing secretion. Positions F17–P40 are excised as a propeptide. Position 43 is a pyrrolidone carboxylic acid (Q43). Position 45 is a hydroxyproline (P45). Disulfide bonds link C47–C53 and C48–C58. Position 58 is a cysteine amide (C58).

Belongs to the conotoxin A superfamily. Expressed by the venom duct.

It is found in the secreted. Functionally, alpha-conotoxins bind to the nicotinic acetylcholine receptors (nAChR) and inhibit them. This peptide potently blocks muscular nicotinic acetylcholine receptor (CHRNA1-CHRNB1-CHRNG-CHRND), and has no effect on neuronal receptors. It is able to totally displace [125I]-Bgtx from the Torpedo receptor with a complete inhibition in the high micromolar range. It produces a biphasic inhibition curve which fits nicely with a two-site model (Ki of 0.46 and 105 nM). The chain is Alpha-conotoxin EIIA from Conus ermineus (Agate cone).